The primary structure comprises 44 residues: Photosystem I reaction center subunit IX (44 aa).

The chain crosses the membrane as a helical span at residues 9 to 29 (FMRSAPIVAAIWISLTAGIII).

It belongs to the PsaJ family.

It is found in the cellular thylakoid membrane. May help in the organization of the PsaE and PsaF subunits. This chain is Photosystem I reaction center subunit IX, found in Prochlorococcus marinus (strain MIT 9515).